The chain runs to 209 residues: Putative tripartite motif-containing protein 61 (209 aa).

Residues 16–57 (CPICLDYLKDPVTISCGHNFCLSCIIMSWKDLHDSFPCPFCH) form an RING-type zinc finger. The B box-type zinc-finger motif lies at 92–133 (EEKHVCKKHNQVLTFFCQKDLELLCPRCSLSTDHQHHCVWPI). Zn(2+)-binding residues include cysteine 97, histidine 100, cysteine 119, and histidine 125.

This Homo sapiens (Human) protein is Putative tripartite motif-containing protein 61 (TRIM61).